The sequence spans 229 residues: Uridylate cyclase (229 aa).

Residues 47–178 (TVLYADLDGS…RAANYAAKLT (132 aa)) form the Guanylate cyclase domain. Residue Tyr50 coordinates a ribonucleoside 5'-triphosphate. Mn(2+) is bound by residues Asp52 and Asp96. A ribonucleoside 5'-triphosphate is bound at residue Arg97.

This sequence belongs to the adenylyl cyclase class-4/guanylyl cyclase family. Pyrimidine cyclase subfamily. As to quaternary structure, homodimer. Mn(2+) serves as cofactor.

It is found in the cytoplasm. It catalyses the reaction UTP = 3',5'-cyclic UMP + diphosphate. Functionally, pycsar (pyrimidine cyclase system for antiphage resistance) provides immunity against bacteriophage. The pyrimidine cyclase (PycC) synthesizes cyclic nucleotides in response to infection; these serve as specific second messenger signals. The signals activate the adjacent effector, leading to bacterial cell death and abortive phage infection. A clade B Pycsar system. The pyrimidine cyclase gene of a two-gene Pycsar system, generates cyclic UMP (cUMP) from UTP, has little to no activity on ATP, CTP or GTP. Expression of this and adjacent effector BcPycTIR (AC A0A0J5WTU0) probably confers resistance to bacteriophage. The genes are probably only expressed in response to bacteriophage infection. The chain is Uridylate cyclase from Burkholderia cepacia (Pseudomonas cepacia).